A 697-amino-acid chain; its full sequence is Phenylalanine--tRNA ligase beta subunit, chloroplastic (697 aa).

The B5 domain maps to 283 to 368 (NISRILFIDK…RIYGFDNFIS (86 aa)). Residues Asp346, Asp352, Glu355, and Glu356 each contribute to the Mg(2+) site. The 89-residue stretch at 609–697 (SSYPSLTRDI…IDDLLNEYKL (89 aa)) folds into the FDX-ACB domain.

It belongs to the phenylalanyl-tRNA synthetase beta subunit family. Type 1 subfamily. As to quaternary structure, tetramer of two alpha and two beta subunits. Requires Mg(2+) as cofactor.

It is found in the plastid. It localises to the chloroplast. The enzyme catalyses tRNA(Phe) + L-phenylalanine + ATP = L-phenylalanyl-tRNA(Phe) + AMP + diphosphate + H(+). This is Phenylalanine--tRNA ligase beta subunit, chloroplastic from Gracilaria tenuistipitata var. liui (Red alga).